A 48-amino-acid chain; its full sequence is Cuticle protein 6 isoform b (48 aa).

This is Cuticle protein 6 isoform b from Limulus polyphemus (Atlantic horseshoe crab).